The following is a 463-amino-acid chain: Chromosomal replication initiator protein DnaA (463 aa).

Residues 1 to 90 (MSLSLWQQCL…KPLSQIISQT (90 aa)) form a domain I, interacts with DnaA modulators region. Positions 91 to 126 (VTASVSAPSAPIVRVAAPSRPSWDNAAPQPELSYRS) are domain II. Positions 127–343 (NVNPKHTFDN…GALNRVIANA (217 aa)) are domain III, AAA+ region. ATP contacts are provided by G171, G173, K174, and T175. The segment at 344-463 (NFTGRAITID…FSNLIRTLSS (120 aa)) is domain IV, binds dsDNA.

The protein belongs to the DnaA family. As to quaternary structure, oligomerizes as a right-handed, spiral filament on DNA at oriC.

Its subcellular location is the cytoplasm. Plays an essential role in the initiation and regulation of chromosomal replication. ATP-DnaA binds to the origin of replication (oriC) to initiate formation of the DNA replication initiation complex once per cell cycle. Binds the DnaA box (a 9 base pair repeat at the origin) and separates the double-stranded (ds)DNA. Forms a right-handed helical filament on oriC DNA; dsDNA binds to the exterior of the filament while single-stranded (ss)DNA is stabiized in the filament's interior. The ATP-DnaA-oriC complex binds and stabilizes one strand of the AT-rich DNA unwinding element (DUE), permitting loading of DNA polymerase. After initiation quickly degrades to an ADP-DnaA complex that is not apt for DNA replication. Binds acidic phospholipids. The protein is Chromosomal replication initiator protein DnaA of Serratia proteamaculans (strain 568).